We begin with the raw amino-acid sequence, 270 residues long: Type III pantothenate kinase (270 aa).

Residue Asp11–Lys18 coordinates ATP. Substrate contacts are provided by residues Tyr96 and Gly103–Arg106. Asp105 functions as the Proton acceptor in the catalytic mechanism. Residue Thr129 participates in ATP binding. Thr195 contributes to the substrate binding site.

It belongs to the type III pantothenate kinase family. In terms of assembly, homodimer. Requires NH4(+) as cofactor. It depends on K(+) as a cofactor.

Its subcellular location is the cytoplasm. The catalysed reaction is (R)-pantothenate + ATP = (R)-4'-phosphopantothenate + ADP + H(+). It participates in cofactor biosynthesis; coenzyme A biosynthesis; CoA from (R)-pantothenate: step 1/5. Its function is as follows. Catalyzes the phosphorylation of pantothenate (Pan), the first step in CoA biosynthesis. The sequence is that of Type III pantothenate kinase from Paraburkholderia xenovorans (strain LB400).